The following is a 456-amino-acid chain: Bifunctional protein GlmU (456 aa).

The tract at residues 1-228 (MPQNTLNIVI…SYLAAGVNNK (228 aa)) is pyrophosphorylase. UDP-N-acetyl-alpha-D-glucosamine contacts are provided by residues 11 to 14 (LAAG), Lys25, Gln75, 80 to 81 (GT), 102 to 104 (YGD), Gly138, Glu153, Asn168, and Asn226. Asp104 lines the Mg(2+) pocket. Asn226 serves as a coordination point for Mg(2+). A linker region spans residues 229–249 (LQLAELERIFQTEQAQELLKA). The segment at 250–456 (GVTLSDPARF…GWVRPEKDKQ (207 aa)) is N-acetyltransferase. Residues Arg332 and Lys350 each coordinate UDP-N-acetyl-alpha-D-glucosamine. His362 functions as the Proton acceptor in the catalytic mechanism. The UDP-N-acetyl-alpha-D-glucosamine site is built by Tyr365 and Asn376. Acetyl-CoA contacts are provided by residues Ala379, 385–386 (NY), Ser404, Ala422, and Arg439.

It in the N-terminal section; belongs to the N-acetylglucosamine-1-phosphate uridyltransferase family. In the C-terminal section; belongs to the transferase hexapeptide repeat family. As to quaternary structure, homotrimer. The cofactor is Mg(2+).

The protein resides in the cytoplasm. It catalyses the reaction alpha-D-glucosamine 1-phosphate + acetyl-CoA = N-acetyl-alpha-D-glucosamine 1-phosphate + CoA + H(+). The enzyme catalyses N-acetyl-alpha-D-glucosamine 1-phosphate + UTP + H(+) = UDP-N-acetyl-alpha-D-glucosamine + diphosphate. Its pathway is nucleotide-sugar biosynthesis; UDP-N-acetyl-alpha-D-glucosamine biosynthesis; N-acetyl-alpha-D-glucosamine 1-phosphate from alpha-D-glucosamine 6-phosphate (route II): step 2/2. It functions in the pathway nucleotide-sugar biosynthesis; UDP-N-acetyl-alpha-D-glucosamine biosynthesis; UDP-N-acetyl-alpha-D-glucosamine from N-acetyl-alpha-D-glucosamine 1-phosphate: step 1/1. It participates in bacterial outer membrane biogenesis; LPS lipid A biosynthesis. Catalyzes the last two sequential reactions in the de novo biosynthetic pathway for UDP-N-acetylglucosamine (UDP-GlcNAc). The C-terminal domain catalyzes the transfer of acetyl group from acetyl coenzyme A to glucosamine-1-phosphate (GlcN-1-P) to produce N-acetylglucosamine-1-phosphate (GlcNAc-1-P), which is converted into UDP-GlcNAc by the transfer of uridine 5-monophosphate (from uridine 5-triphosphate), a reaction catalyzed by the N-terminal domain. This is Bifunctional protein GlmU from Neisseria meningitidis serogroup C / serotype 2a (strain ATCC 700532 / DSM 15464 / FAM18).